The primary structure comprises 434 residues: Adenylosuccinate synthetase (434 aa).

Residues glycine 25–lysine 31 and glycine 53–threonine 55 each bind GTP. Aspartate 26 functions as the Proton acceptor in the catalytic mechanism. Aspartate 26 and glycine 53 together coordinate Mg(2+). Residues aspartate 26–lysine 29, asparagine 51–histidine 54, threonine 142, arginine 156, asparagine 233, threonine 248, and arginine 312 contribute to the IMP site. Histidine 54 acts as the Proton donor in catalysis. A substrate-binding site is contributed by valine 308 to arginine 314. GTP-binding positions include arginine 314, lysine 340–aspartate 342, and glycine 422–glycine 424.

Belongs to the adenylosuccinate synthetase family. Homodimer. Requires Mg(2+) as cofactor.

Its subcellular location is the cytoplasm. The enzyme catalyses IMP + L-aspartate + GTP = N(6)-(1,2-dicarboxyethyl)-AMP + GDP + phosphate + 2 H(+). The protein operates within purine metabolism; AMP biosynthesis via de novo pathway; AMP from IMP: step 1/2. In terms of biological role, plays an important role in the de novo pathway and in the salvage pathway of purine nucleotide biosynthesis. Catalyzes the first committed step in the biosynthesis of AMP from IMP. This Schizosaccharomyces japonicus (strain yFS275 / FY16936) (Fission yeast) protein is Adenylosuccinate synthetase.